A 464-amino-acid polypeptide reads, in one-letter code: Glutamate--tRNA ligase 1 (464 aa).

A 'HIGH' region motif is present at residues 10–20 (PSPTGYLHIGG). Positions 238 to 242 (KLSKR) match the 'KMSKS' region motif. K241 serves as a coordination point for ATP.

It belongs to the class-I aminoacyl-tRNA synthetase family. Glutamate--tRNA ligase type 1 subfamily. In terms of assembly, monomer.

It localises to the cytoplasm. The catalysed reaction is tRNA(Glu) + L-glutamate + ATP = L-glutamyl-tRNA(Glu) + AMP + diphosphate. Its function is as follows. Catalyzes the attachment of glutamate to tRNA(Glu) in a two-step reaction: glutamate is first activated by ATP to form Glu-AMP and then transferred to the acceptor end of tRNA(Glu). The protein is Glutamate--tRNA ligase 1 of Helicobacter hepaticus (strain ATCC 51449 / 3B1).